A 131-amino-acid chain; its full sequence is Antiholin (131 aa).

Topologically, residues 1–14 (MKMIAWMQHFLETD) are periplasmic. Cytoplasmic-side segments run 1 to 52 (MKMI…SSFK) and 38 to 49 (LFAKLNPNIKFS). Residues 15-37 (ETKLIYWLTFLMVCMVVDTVLGV) traverse the membrane as a helical segment. Residues 53–75 (IKTGVLIKVSEMILALLAIPFAV) traverse the membrane as a helical segment. Residues 76-78 (PFP) are Periplasmic-facing. Residues 79 to 101 (AGLPLLYTVYTALCVSEIYSIFG) form a helical membrane-spanning segment. Over 102–131 (HLRLVDDKSDFLEILENFFKRTSGKNKEEK) the chain is Cytoplasmic.

This sequence belongs to the bacteriophage holin family. phi29likevirus holin subfamily. As to quaternary structure, homomultimer. Interacts with isoform Antiholin; this interaction blocks the holin homomultimerization and delays host cell lysis.

Its subcellular location is the host cell inner membrane. Its function is as follows. Accumulates harmlessly in the cytoplasmic membrane until it reaches a critical concentration that triggers the formation of micron-scale pores (holes) causing host cell membrane disruption and endolysin escape into the periplasmic space. Determines the precise timing of host cell lysis. Participates with the endolysin and spanin proteins in the sequential events which lead to the programmed host cell lysis releasing the mature viral particles from the host cell. Counteracts the aggregation of the holin molecules and thus of pore formation. The polypeptide is Antiholin (14) (Bacillus subtilis (Bacteriophage phi-29)).